Here is a 367-residue protein sequence, read N- to C-terminus: tRNA (cytosine(34)-C(5))-methyltransferase, mitochondrial (367 aa).

S-adenosyl-L-methionine-binding positions include 170-176 (CAAPGGK), Glu-193, Asp-224, and Asp-242. Cys-296 acts as the Nucleophile in catalysis.

This sequence belongs to the class I-like SAM-binding methyltransferase superfamily. RsmB/NOP family.

It is found in the mitochondrion matrix. The catalysed reaction is cytidine(34) in mitochondrial tRNA + S-adenosyl-L-methionine = 5-methylcytidine(34) in mitochondrial tRNA + S-adenosyl-L-homocysteine + H(+). Mitochondrial tRNA methyltransferase that mediates methylation of cytosine to 5-methylcytosine (m5C) at position 34 of mt-tRNA(Met). mt-tRNA(Met) methylation at cytosine(34) takes place at the wobble position of the anticodon and initiates the formation of 5-formylcytosine (f(5)c) at this position. mt-tRNA(Met) containing the f(5)c modification at the wobble position enables recognition of the AUA codon in addition to the AUG codon, expanding codon recognition in mitochondrial translation. The polypeptide is tRNA (cytosine(34)-C(5))-methyltransferase, mitochondrial (Danio rerio (Zebrafish)).